We begin with the raw amino-acid sequence, 431 residues long: Glutamate-1-semialdehyde 2,1-aminomutase (431 aa).

K269 carries the N6-(pyridoxal phosphate)lysine modification.

Belongs to the class-III pyridoxal-phosphate-dependent aminotransferase family. HemL subfamily. Homodimer. It depends on pyridoxal 5'-phosphate as a cofactor.

Its subcellular location is the cytoplasm. The catalysed reaction is (S)-4-amino-5-oxopentanoate = 5-aminolevulinate. It participates in porphyrin-containing compound metabolism; protoporphyrin-IX biosynthesis; 5-aminolevulinate from L-glutamyl-tRNA(Glu): step 2/2. It functions in the pathway porphyrin-containing compound metabolism; chlorophyll biosynthesis. This is Glutamate-1-semialdehyde 2,1-aminomutase from Chlorobium limicola (strain DSM 245 / NBRC 103803 / 6330).